The following is a 176-amino-acid chain: MDLPGPIHDFLLVFLGSGLILGGLGVVLLTNPIYSAFSLGLVLVCISLFYIPSNSHFVAAAQLLIYVGAINVLIIFAVMFMNGSEYYNDFHLWTVGDGVTSLLCTSIFVSLITTIPDTSWYGVIWTTRSNQIIEQDLISNGQQIGIHLSTDFFLPFELISIILLVALIGAIAMARQ.

5 consecutive transmembrane segments (helical) span residues 10 to 30 (FLLVFLGSGLILGGLGVVLLT), 32 to 52 (PIYSAFSLGLVLVCISLFYIP), 61 to 81 (AQLLIYVGAINVLIIFAVMFM), 92 to 112 (LWTVGDGVTSLLCTSIFVSLI), and 152 to 172 (FFLPFELISIILLVALIGAIA).

It belongs to the complex I subunit 6 family. NDH is composed of at least 16 different subunits, 5 of which are encoded in the nucleus.

The protein resides in the plastid. It localises to the chloroplast thylakoid membrane. It catalyses the reaction a plastoquinone + NADH + (n+1) H(+)(in) = a plastoquinol + NAD(+) + n H(+)(out). The catalysed reaction is a plastoquinone + NADPH + (n+1) H(+)(in) = a plastoquinol + NADP(+) + n H(+)(out). NDH shuttles electrons from NAD(P)H:plastoquinone, via FMN and iron-sulfur (Fe-S) centers, to quinones in the photosynthetic chain and possibly in a chloroplast respiratory chain. The immediate electron acceptor for the enzyme in this species is believed to be plastoquinone. Couples the redox reaction to proton translocation, and thus conserves the redox energy in a proton gradient. The chain is NAD(P)H-quinone oxidoreductase subunit 6, chloroplastic (ndhG) from Platanus occidentalis (Sycamore).